A 406-amino-acid polypeptide reads, in one-letter code: Tryptophan 2,3-dioxygenase (406 aa).

Phosphoserine is present on Ser19. Substrate-binding positions include 72 to 76 and Arg144; that span reads FIITH. Residue His328 coordinates heme. Thr342 lines the substrate pocket.

It belongs to the tryptophan 2,3-dioxygenase family. Homotetramer. Dimer of dimers. It depends on heme as a cofactor.

The catalysed reaction is L-tryptophan + O2 = N-formyl-L-kynurenine. It functions in the pathway amino-acid degradation; L-tryptophan degradation via kynurenine pathway; L-kynurenine from L-tryptophan: step 1/2. In terms of biological role, heme-dependent dioxygenase that catalyzes the oxidative cleavage of the L-tryptophan (L-Trp) pyrrole ring and converts L-tryptophan to N-formyl-L-kynurenine. Catalyzes the oxidative cleavage of the indole moiety. The protein is Tryptophan 2,3-dioxygenase of Bos taurus (Bovine).